We begin with the raw amino-acid sequence, 491 residues long: Serine/threonine-protein kinase 3 (491 aa).

At methionine 1 the chain carries N-acetylmethionine. Serine 15 bears the Phosphoserine; by PLK1 mark. Positions 27-278 constitute a Protein kinase domain; that stretch reads FDVLEKLGEG…ATQLLQHPFI (252 aa). ATP is bound by residues 33–41 and lysine 56; that span reads LGEGSYGSV. The residue at position 117 (threonine 117) is a Phosphothreonine; by PKB/AKT1. The Proton acceptor role is filled by aspartate 146. Mg(2+)-binding residues include asparagine 151 and aspartate 164. Residues threonine 174 and threonine 180 each carry the phosphothreonine; by autocatalysis modification. Residues 287-328 are a coiled coil; the sequence is LRDLITEAMEIKAKRHEEQQRELEEEEENSDEDELDSHTMVK. Positions 301–327 are disordered; the sequence is RHEEQQRELEEEEENSDEDELDSHTMV. Residues 309–321 are compositionally biased toward acidic residues; the sequence is LEEEEENSDEDEL. Phosphoserine is present on serine 316. 2 positions are modified to phosphothreonine; by autocatalysis: threonine 336 and threonine 378. The segment at 370–392 is disordered; that stretch reads EDEEEEDGTMKRNATSPQVQRPS. The segment covering 381–390 has biased composition (polar residues); sequence RNATSPQVQR. A Phosphothreonine; by PKB/AKT1 modification is found at threonine 384. Phosphoserine is present on residues serine 385 and serine 444. Residues 437 to 484 enclose the SARAH domain; the sequence is FDFLKNLSLEELQMRLKALDPMMEREIEELRQRYTAKRQPILDAMDAK. The stretch at 442–475 forms a coiled coil; it reads NLSLEELQMRLKALDPMMEREIEELRQRYTAKRQ.

Belongs to the protein kinase superfamily. STE Ser/Thr protein kinase family. STE20 subfamily. Homodimer; mediated via the coiled-coil region. Interacts with NORE1, which inhibits autoactivation. Interacts with and stabilizes SAV1. Interacts with RAF1, which prevents dimerization and phosphorylation. Interacts with RASSF1. Interacts (via SARAH domain) with isoform 1 of NEK2. Interacts with ESR1 only in the presence of SAV1. Interacts with PKB/AKT1. Forms a tripartite complex with MOBKL1B and STK38. Interacts with RASSF2 (via SARAH domain). Interacts with DLG5 (via PDZ domain 3). Interacts with LATS1; this interaction is inhibited in the presence of DLG5. Interacts with MARK3 in the presence of DLG5. Interacts with RASSF5; this interaction inhibits STK3 autoactivation through heterodimerization. Interacts (when phosphorylated) with SLMAP (via FHA domain); the interaction associates STK3 with the STRIPAK complex. Mg(2+) is required as a cofactor. In terms of processing, autophosphorylated on two residues Thr-174 and Thr-180, leading to activation. Phosphorylation at Thr-117 and Thr-384 by PKB/AKT1, leads to inhibition of its: cleavage, kinase activity, autophosphorylation at Thr-180, binding to RASSF1 and nuclear translocation, and increase in its binding to RAF1. Phosphorylated at Ser-15 by PLK1, leading to activation. When autophosphorylated at Thr-180, recruits STRIPAK complex and promotes PP2A-mediated dephosphorylation and inactivation of STK3. Proteolytically cleaved by caspase-3 during apoptosis. Proteolytic cleavage results in kinase activation and nuclear translocation of the truncated form (MST1/N). Post-translationally, ubiquitinated by TRIM69; leading to its redistribution to the perinuclear cytoskeleton, where it is phosphorylated by PLK1 and subsequently activated. In terms of tissue distribution, expressed at high levels in adult kidney, skeletal and placenta tissues and at very low levels in adult heart, lung and brain tissues.

The protein resides in the cytoplasm. It is found in the nucleus. It localises to the cytoskeleton. Its subcellular location is the microtubule organizing center. The protein localises to the centrosome. The catalysed reaction is L-seryl-[protein] + ATP = O-phospho-L-seryl-[protein] + ADP + H(+). The enzyme catalyses L-threonyl-[protein] + ATP = O-phospho-L-threonyl-[protein] + ADP + H(+). With respect to regulation, inhibited by the C-terminal non-catalytic region. Activated by caspase-cleavage. Full activation also requires homodimerization and autophosphorylation of Thr-180, which are inhibited by the proto-oncogene product RAF1. Activated by RASSF1 which acts by preventing its dephosphorylation. When autophosphorylated at Thr-180, recruits STRIPAK complex and promotes PP2A-mediated dephosphorylation and inactivation of STK3. In terms of biological role, stress-activated, pro-apoptotic kinase which, following caspase-cleavage, enters the nucleus and induces chromatin condensation followed by internucleosomal DNA fragmentation. Key component of the Hippo signaling pathway which plays a pivotal role in organ size control and tumor suppression by restricting proliferation and promoting apoptosis. The core of this pathway is composed of a kinase cascade wherein STK3/MST2 and STK4/MST1, in complex with its regulatory protein SAV1, phosphorylates and activates LATS1/2 in complex with its regulatory protein MOB1, which in turn phosphorylates and inactivates YAP1 oncoprotein and WWTR1/TAZ. Phosphorylation of YAP1 by LATS2 inhibits its translocation into the nucleus to regulate cellular genes important for cell proliferation, cell death, and cell migration. STK3/MST2 and STK4/MST1 are required to repress proliferation of mature hepatocytes, to prevent activation of facultative adult liver stem cells (oval cells), and to inhibit tumor formation. Phosphorylates NKX2-1. Phosphorylates NEK2 and plays a role in centrosome disjunction by regulating the localization of NEK2 to centrosome, and its ability to phosphorylate CROCC and CEP250. In conjunction with SAV1, activates the transcriptional activity of ESR1 through the modulation of its phosphorylation. Positively regulates RAF1 activation via suppression of the inhibitory phosphorylation of RAF1 on 'Ser-259'. Phosphorylates MOBKL1A and RASSF2. Phosphorylates MOBKL1B on 'Thr-74'. Acts cooperatively with MOBKL1B to activate STK38. The polypeptide is Serine/threonine-protein kinase 3 (Homo sapiens (Human)).